We begin with the raw amino-acid sequence, 421 residues long: Granaticin polyketide putative beta-ketoacyl synthase 1 (421 aa).

The 415-residue stretch at 2–416 (TRRVVITGVG…GFQSAMVLHR (415 aa)) folds into the Ketosynthase family 3 (KS3) domain. Active-site for beta-ketoacyl synthase activity residues include Cys169, His309, and His346.

The protein belongs to the thiolase-like superfamily. Beta-ketoacyl-ACP synthases family.

It participates in antibiotic biosynthesis; granaticin biosynthesis. This chain is Granaticin polyketide putative beta-ketoacyl synthase 1 (gra-orf1), found in Streptomyces violaceoruber.